The following is a 135-amino-acid chain: Small ribosomal subunit protein uS8 (135 aa).

It belongs to the universal ribosomal protein uS8 family. Part of the 30S ribosomal subunit. Contacts proteins S5 and S12.

Its function is as follows. One of the primary rRNA binding proteins, it binds directly to 16S rRNA central domain where it helps coordinate assembly of the platform of the 30S subunit. The polypeptide is Small ribosomal subunit protein uS8 (Parafrankia sp. (strain EAN1pec)).